A 1092-amino-acid polypeptide reads, in one-letter code: Elongation factor 3 (1092 aa).

Residue valine 92 coordinates ADP. HEAT repeat units follow at residues 95-133, 138-175, 177-214, 218-255, 257-293, 294-331, and 333-370; these read MVKT…SPVS, PYMI…RLTP, ATKQ…TAPR, TAVP…LINN, DIEK…EVLP, PTLA…LVEK, and QIIA…KILT. Residue glutamate 454 coordinates ADP. ABC transporter domains are found at residues 486–704 and 730–1044; these read EELC…YYEL and LKVQ…DKNK. ADP-binding residues include asparagine 766, glutamate 973, asparagine 976, and histidine 1002. Disordered regions lie at residues 1023–1044 and 1063–1092; these read TPTG…DKNK and SKLS…DDDE. Positions 1063 to 1075 are enriched in basic residues; that stretch reads SKLSGKDLRKKRK. Basic and acidic residues predominate over residues 1076–1086; the sequence is EREARRKRGEE.

It belongs to the ABC transporter superfamily. ABCF family. EF3 subfamily.

The protein resides in the cytoplasm. It is found in the cytosol. The enzyme catalyses ATP + H2O = ADP + phosphate + H(+). Its pathway is protein biosynthesis; polypeptide chain elongation. Ribosome-dependent ATPase that functions in cytoplasmic translation elongation. Required for the ATP-dependent release of deacylated tRNA from the ribosomal E-site during protein biosynthesis. Stimulates the eEF1A-dependent binding of aminoacyl-tRNA to the ribosomal A-site, which has reduced affinity for tRNA as long as the E-site is occupied. Assists translation termination by stimulating the release of nascent protein from the ribosome by release factors. The sequence is that of Elongation factor 3 from Gonapodya prolifera (strain JEL478) (Monoblepharis prolifera).